The following is a 483-amino-acid chain: Probable cytochrome P450 517A4 (483 aa).

The chain crosses the membrane as a helical span at residues 1–21 (MEIVNVLLFLIILFLVKDFVK). Cysteine 429 lines the heme pocket.

The protein belongs to the cytochrome P450 family. Requires heme as cofactor.

The protein resides in the membrane. In Dictyostelium discoideum (Social amoeba), this protein is Probable cytochrome P450 517A4 (cyp517A4).